The primary structure comprises 221 residues: Ribose-5-phosphate isomerase A (221 aa).

Residues 26–29 (TGST), 81–84 (DGAD), and 94–97 (KGGG) contribute to the substrate site. Residue Glu103 is the Proton acceptor of the active site. Residue Lys121 coordinates substrate.

This sequence belongs to the ribose 5-phosphate isomerase family. As to quaternary structure, homodimer.

It carries out the reaction aldehydo-D-ribose 5-phosphate = D-ribulose 5-phosphate. Its pathway is carbohydrate degradation; pentose phosphate pathway; D-ribose 5-phosphate from D-ribulose 5-phosphate (non-oxidative stage): step 1/1. In terms of biological role, catalyzes the reversible conversion of ribose-5-phosphate to ribulose 5-phosphate. This chain is Ribose-5-phosphate isomerase A, found in Bacillus mycoides (strain KBAB4) (Bacillus weihenstephanensis).